Reading from the N-terminus, the 606-residue chain is Vacuolar calcium ion transporter (606 aa).

Residues 1 to 110 are disordered; the sequence is MSPPRRVSFP…NSLDPNPGLM (110 aa). The Cytoplasmic portion of the chain corresponds to 1–137; it reads MSPPRRVSFP…PTYWGSMKAA (137 aa). Residues 18-30 are compositionally biased toward low complexity; the sequence is PPLADSPLSSPKL. Residues 36–56 are compositionally biased toward polar residues; it reads QSSSTPIVSSNLPTDTTNSAS. A helical transmembrane segment spans residues 138–158; it reads ITSTWLNVLLVFIPIGWALYL. Topologically, residues 159–170 are vacuolar; that stretch reads AKHNGGKDSISD. A helical transmembrane segment spans residues 171–191; the sequence is TAVFCCTFIAIIPLAGLLGFA. At 192 to 204 the chain is on the cytoplasmic side; the sequence is TEEAALRLGQTLG. A helical membrane pass occupies residues 205 to 225; it reads GLLNATLGNAVELIVAILALI. Over 226 to 236 the chain is Vacuolar; it reads KCELQVVQSSL. A helical transmembrane segment spans residues 237–257; sequence VGSILSNILLVLGMCFFAGGV. The Cytoplasmic portion of the chain corresponds to 258 to 272; sequence RFAEQAIKSTAAQLN. The chain crosses the membrane as a helical span at residues 273–293; the sequence is ASLLLIAVIAVLIPSAFHFSI. Residues 294-313 are Vacuolar-facing; sequence SSSTSNTDASELANGEGADL. The helical transmembrane segment at 314 to 334 threads the bilayer; sequence LSMSHAVSILLLILYLGYLLF. Over 335–437 the chain is Cytoplasmic; it reads QMWTHATYYV…EEEEETPQMN (103 aa). The interval 376–434 is disordered; the sequence is DEEESYSTATTVSDAAVPPSARAEGGEVPATHGPGTAAAETGNRVEHEDAEEEEEEETP. The span at 423-433 shows a compositional bias: acidic residues; the sequence is EDAEEEEEEET. A helical transmembrane segment spans residues 438 to 458; sequence VVCTIALMVIDTVLVGVTAEF. The Vacuolar segment spans residues 459–477; sequence LVDSINGMVESNPSLSAEW. Residues 478–498 form a helical membrane-spanning segment; that stretch reads VGLILLPIVGNAAEHFTAVSV. Residues 499-505 lie on the Cytoplasmic side of the membrane; it reads SVKDKLD. The chain crosses the membrane as a helical span at residues 506–526; sequence LSISVAVGSSIQIALFVIPVI. Over 527–535 the chain is Vacuolar; that stretch reads ELLAWTIGK. A helical membrane pass occupies residues 536-556; it reads PMTLLFDPYESIVLFLSVLIV. Residues 557-566 lie on the Cytoplasmic side of the membrane; the sequence is NQTLADGRSN. Residues 567 to 587 traverse the membrane as a helical segment; the sequence is WMEGMVLMMLYIIIAVSFWYY. The Vacuolar segment spans residues 588-606; that stretch reads PGSTTATLLGCQDSSSVTG.

The protein belongs to the Ca(2+):cation antiporter (CaCA) (TC 2.A.19) family.

The protein localises to the vacuole membrane. Its function is as follows. Has a role in promoting intracellular calcium ion sequestration via the exchange of calcium ions for hydrogen ions across the vacuolar membrane. This chain is Vacuolar calcium ion transporter, found in Cryptococcus neoformans var. grubii serotype A (strain H99 / ATCC 208821 / CBS 10515 / FGSC 9487) (Filobasidiella neoformans var. grubii).